The sequence spans 466 residues: Ribulose bisphosphate carboxylase large chain (466 aa).

K5 bears the N6,N6,N6-trimethyllysine mark. Substrate contacts are provided by N114 and T164. The active-site Proton acceptor is K166. A substrate-binding site is contributed by K168. 3 residues coordinate Mg(2+): K192, D194, and E195. N6-carboxylysine is present on K192. The active-site Proton acceptor is the H285. Substrate contacts are provided by R286, H318, and S370.

The protein belongs to the RuBisCO large chain family. Type I subfamily. As to quaternary structure, heterohexadecamer of 8 large chains and 8 small chains. Requires Mg(2+) as cofactor.

The protein localises to the plastid. It is found in the chloroplast. The catalysed reaction is 2 (2R)-3-phosphoglycerate + 2 H(+) = D-ribulose 1,5-bisphosphate + CO2 + H2O. It catalyses the reaction D-ribulose 1,5-bisphosphate + O2 = 2-phosphoglycolate + (2R)-3-phosphoglycerate + 2 H(+). Functionally, ruBisCO catalyzes two reactions: the carboxylation of D-ribulose 1,5-bisphosphate, the primary event in carbon dioxide fixation, as well as the oxidative fragmentation of the pentose substrate in the photorespiration process. Both reactions occur simultaneously and in competition at the same active site. In Cornus kousa (Kousa dogwood), this protein is Ribulose bisphosphate carboxylase large chain.